We begin with the raw amino-acid sequence, 252 residues long: Trans-aconitate 2-methyltransferase (252 aa).

The protein belongs to the methyltransferase superfamily. Tam family.

Its subcellular location is the cytoplasm. The catalysed reaction is trans-aconitate + S-adenosyl-L-methionine = (E)-3-(methoxycarbonyl)pent-2-enedioate + S-adenosyl-L-homocysteine. Its function is as follows. Catalyzes the S-adenosylmethionine monomethyl esterification of trans-aconitate. The chain is Trans-aconitate 2-methyltransferase from Escherichia coli (strain 55989 / EAEC).